Consider the following 453-residue polypeptide: Probable exopolygalacturonase B (453 aa).

The first 16 residues, 1 to 16 (MKFFALAALFASTVNS), serve as a signal peptide directing secretion. N-linked (GlcNAc...) asparagine glycosylation is found at Asn185 and Asn225. Catalysis depends on Asp255, which acts as the Proton donor. Cys257 and Cys274 are oxidised to a cystine. Asn263 and Asn275 each carry an N-linked (GlcNAc...) asparagine glycan. Residue His278 is part of the active site. PbH1 repeat units lie at residues 295-316 (IENV…RLKA) and 327-348 (INNV…VLDQ). Asn302, Asn329, Asn354, and Asn366 each carry an N-linked (GlcNAc...) asparagine glycan. Residues 362–405 (PSRVNFTNIVFEDIYGTSSGKRGKVVADLTCSPNAVCSGIRLKN) form a PbH1 3 repeat. Residues Cys392 and Cys398 are joined by a disulfide bond. An N-linked (GlcNAc...) asparagine glycan is attached at Asn436.

It belongs to the glycosyl hydrolase 28 family.

Its subcellular location is the secreted. It carries out the reaction [(1-&gt;4)-alpha-D-galacturonosyl](n) + H2O = alpha-D-galacturonate + [(1-&gt;4)-alpha-D-galacturonosyl](n-1). Its function is as follows. Specific in hydrolyzing the terminal glycosidic bond of polygalacturonic acid and oligogalacturonates. The polypeptide is Probable exopolygalacturonase B (pgxB) (Aspergillus fumigatus (strain ATCC MYA-4609 / CBS 101355 / FGSC A1100 / Af293) (Neosartorya fumigata)).